Here is a 1316-residue protein sequence, read N- to C-terminus: DNA-directed RNA polymerase subunit beta' (1316 aa).

The Zn(2+) site is built by cysteine 60, cysteine 62, cysteine 75, and cysteine 78. Mg(2+)-binding residues include aspartate 535, aspartate 537, and aspartate 539. The Zn(2+) site is built by cysteine 891, cysteine 968, cysteine 975, and cysteine 978.

It belongs to the RNA polymerase beta' chain family. In terms of assembly, the RNAP catalytic core consists of 2 alpha, 1 beta, 1 beta' and 1 omega subunit. When a sigma factor is associated with the core the holoenzyme is formed, which can initiate transcription. It depends on Mg(2+) as a cofactor. Requires Zn(2+) as cofactor.

The catalysed reaction is RNA(n) + a ribonucleoside 5'-triphosphate = RNA(n+1) + diphosphate. Its function is as follows. DNA-dependent RNA polymerase catalyzes the transcription of DNA into RNA using the four ribonucleoside triphosphates as substrates. The sequence is that of DNA-directed RNA polymerase subunit beta' from Mycobacterium tuberculosis (strain ATCC 25177 / H37Ra).